The primary structure comprises 127 residues: Large ribosomal subunit protein bL12 (127 aa).

N6-methyllysine occurs at positions 77 and 88.

The protein belongs to the bacterial ribosomal protein bL12 family. In terms of assembly, homodimer. Part of the ribosomal stalk of the 50S ribosomal subunit. Forms a multimeric L10(L12)X complex, where L10 forms an elongated spine to which 2 to 4 L12 dimers bind in a sequential fashion. Binds GTP-bound translation factors.

Its function is as follows. Forms part of the ribosomal stalk which helps the ribosome interact with GTP-bound translation factors. Is thus essential for accurate translation. This Nitratidesulfovibrio vulgaris (strain DSM 19637 / Miyazaki F) (Desulfovibrio vulgaris) protein is Large ribosomal subunit protein bL12.